The sequence spans 539 residues: Oviduct-specific glycoprotein (539 aa).

The first 21 residues, 1 to 21, serve as a signal peptide directing secretion; sequence MGKLLLWVGLLLMLKHHDGAA. A GH18 domain is found at 22-385; the sequence is HKLVCYFTNW…HTLNNLLVND (364 aa). Cys26 and Cys51 are oxidised to a cystine. Residues 71–72, 98–101, Tyr142, 211–214, and Trp355 each bind chitin; these read PL, GGWN, and LSYD. A glycan (N-linked (GlcNAc...) asparagine) is linked at Asn402. 2 disordered regions span residues 433–480 and 503–539; these read TETH…KPLT and QKVTPPGRKAGVPEKVTIPSGKMTVTPDGRAETLERL. A compositionally biased stretch (low complexity) spans 440–457; it reads ATMTTTPRGETATPTRTP.

It belongs to the glycosyl hydrolase 18 family. In terms of tissue distribution, oviduct.

Its subcellular location is the cytoplasmic vesicle. The protein localises to the secretory vesicle. Functionally, binds to oocyte zona pellucida in vivo. May play a role in the fertilization process and/or early embryonic development. In Ovis aries (Sheep), this protein is Oviduct-specific glycoprotein (OVGP1).